Here is a 246-residue protein sequence, read N- to C-terminus: Aquaporin AqpM (246 aa).

At 1 to 11 the chain is on the cytoplasmic side; sequence MVSLTKRCIAE. Residues 12 to 32 form a helical membrane-spanning segment; sequence FIGTFFLVFFGAGAAAITLMI. Residues 33–45 are Extracellular-facing; that stretch reads ASGGTAPNPFNIG. The chain crosses the membrane as a helical span at residues 46–66; that stretch reads IGLLGGLGDWVAIGLAFGFAI. At 67-69 the chain is on the cytoplasmic side; it reads AAS. Residues 70–90 traverse the membrane as a helical segment; sequence IYALGNISGCHINPAVTIGLW. Positions 82 to 84 match the NPA 1 motif; sequence NPA. Residues 91–103 are Extracellular-facing; sequence SVKKFPGRDVVPY. The chain crosses the membrane as a helical span at residues 104–124; that stretch reads IIAQLLGAAFASFIFLQCAGI. At 125 to 145 the chain is on the cytoplasmic side; the sequence is TAATIGGLGATAPFPGIGYWQ. The helical transmembrane segment at 146 to 166 threads the bilayer; that stretch reads AMLAETVGTFLLMITIMGIAV. The Extracellular portion of the chain corresponds to 167-172; the sequence is DERAPK. Residues 173-193 traverse the membrane as a helical segment; it reads GFAGIIIGLTVAGIITTIGNI. The Cytoplasmic portion of the chain corresponds to 194–217; sequence TGSSLNPARTFGPYLNDMVFAGTN. An NPA 2 motif is present at residues 199–201; it reads NPA. The chain crosses the membrane as a helical span at residues 218–238; sequence LWNYFPIYVIGPVVGAVLAAL. Topologically, residues 239–246 are extracellular; sequence TYQYLTSE.

Belongs to the MIP/aquaporin (TC 1.A.8) family. Homotetramer.

Its subcellular location is the cell membrane. In terms of biological role, channel that permits osmotically driven movement of water in both directions. It mediates rapid entry or exit of water in response to abrupt changes in osmolarity. Also exhibits a transient but reproducible increase in the initial glycerol flux. This chain is Aquaporin AqpM (aqpM), found in Methanothermobacter thermautotrophicus (strain ATCC 29096 / DSM 1053 / JCM 10044 / NBRC 100330 / Delta H) (Methanobacterium thermoautotrophicum).